Here is a 356-residue protein sequence, read N- to C-terminus: Nitrilase, arylacetone-specific (356 aa).

The region spanning 7 to 280 (VRAAAVQAAS…EGLIIADLNM (274 aa)) is the CN hydrolase domain. Residue E47 is the Proton acceptor of the active site. K129 (proton donor) is an active-site residue. C163 serves as the catalytic Nucleophile. Residues 324-356 (QEEAPEPHVQSTAAPVAVSQTQDSDTLLVQEPS) are disordered. The span at 332–356 (VQSTAAPVAVSQTQDSDTLLVQEPS) shows a compositional bias: polar residues.

Belongs to the carbon-nitrogen hydrolase superfamily. Nitrilase family. As to quaternary structure, homohexamer.

The enzyme catalyses a nitrile + 2 H2O = a carboxylate + NH4(+). In terms of biological role, nitrilase that acts mostly on arylacetonitriles. The chain is Nitrilase, arylacetone-specific from Alcaligenes faecalis.